A 150-amino-acid chain; its full sequence is 3-hydroxyacyl-[acyl-carrier-protein] dehydratase FabZ (150 aa).

Histidine 52 is an active-site residue.

The protein belongs to the thioester dehydratase family. FabZ subfamily.

The protein localises to the cytoplasm. It catalyses the reaction a (3R)-hydroxyacyl-[ACP] = a (2E)-enoyl-[ACP] + H2O. Its function is as follows. Involved in unsaturated fatty acids biosynthesis. Catalyzes the dehydration of short chain beta-hydroxyacyl-ACPs and long chain saturated and unsaturated beta-hydroxyacyl-ACPs. This is 3-hydroxyacyl-[acyl-carrier-protein] dehydratase FabZ from Variovorax paradoxus (strain S110).